Reading from the N-terminus, the 33-residue chain is Photosystem II reaction center protein Psb30 (33 aa).

A helical transmembrane segment spans residues 5 to 25; the sequence is LIVQLGSLTLITIAGPLIVAL.

It belongs to the Psb30/Ycf12 family. PSII is composed of 1 copy each of membrane proteins PsbA, PsbB, PsbC, PsbD, PsbE, PsbF, PsbH, PsbI, PsbJ, PsbK, PsbL, PsbM, PsbT, PsbY, PsbZ, Psb30/Ycf12, peripheral proteins of the oxygen-evolving complex and a large number of cofactors. It forms dimeric complexes.

The protein resides in the plastid. It localises to the chloroplast thylakoid membrane. In terms of biological role, a core subunit of photosystem II (PSII), probably helps stabilize the reaction center. In Euglena mutabilis, this protein is Photosystem II reaction center protein Psb30.